The primary structure comprises 303 residues: Probable cat1 operon transcriptional activator (303 aa).

The HTH lysR-type domain maps to 1–58 (MDLRQFRYFVAVARERNFTRAARQLNIAQPPLSRQIQLLEEEVGVPLLIRNSRPVQLT). The H-T-H motif DNA-binding region spans 18–37 (FTRAARQLNIAQPPLSRQIQ).

It belongs to the LysR transcriptional regulatory family.

In terms of biological role, probable positive regulator of the cat1 operon which encode enzymes responsible for the degradation of catechol to acetyl-CoA via the beta-ketoadipate pathway. The sequence is that of Probable cat1 operon transcriptional activator from Acinetobacter lwoffii.